The chain runs to 96 residues: Aspartyl/glutamyl-tRNA(Asn/Gln) amidotransferase subunit C (96 aa).

This sequence belongs to the GatC family. As to quaternary structure, heterotrimer of A, B and C subunits.

It carries out the reaction L-glutamyl-tRNA(Gln) + L-glutamine + ATP + H2O = L-glutaminyl-tRNA(Gln) + L-glutamate + ADP + phosphate + H(+). The enzyme catalyses L-aspartyl-tRNA(Asn) + L-glutamine + ATP + H2O = L-asparaginyl-tRNA(Asn) + L-glutamate + ADP + phosphate + 2 H(+). Functionally, allows the formation of correctly charged Asn-tRNA(Asn) or Gln-tRNA(Gln) through the transamidation of misacylated Asp-tRNA(Asn) or Glu-tRNA(Gln) in organisms which lack either or both of asparaginyl-tRNA or glutaminyl-tRNA synthetases. The reaction takes place in the presence of glutamine and ATP through an activated phospho-Asp-tRNA(Asn) or phospho-Glu-tRNA(Gln). The protein is Aspartyl/glutamyl-tRNA(Asn/Gln) amidotransferase subunit C of Bacillus cytotoxicus (strain DSM 22905 / CIP 110041 / 391-98 / NVH 391-98).